The sequence spans 121 residues: uncharacterized protein (121 aa).

This is an uncharacterized protein from Caenorhabditis elegans.